The chain runs to 293 residues: Acetyl-coenzyme A carboxylase carboxyl transferase subunit beta (293 aa).

The 265-residue stretch at 29-293 folds into the CoA carboxyltransferase N-terminal domain; sequence LWRKCPRCEG…MGWPPLALDD (265 aa). Positions 33, 36, 52, and 55 each coordinate Zn(2+). Residues 33–55 form a C4-type zinc finger; sequence CPRCEGVVYRPELDRNMDVCPKC.

It belongs to the AccD/PCCB family. In terms of assembly, acetyl-CoA carboxylase is a heterohexamer composed of biotin carboxyl carrier protein (AccB), biotin carboxylase (AccC) and two subunits each of ACCase subunit alpha (AccA) and ACCase subunit beta (AccD). It depends on Zn(2+) as a cofactor.

It localises to the cytoplasm. It carries out the reaction N(6)-carboxybiotinyl-L-lysyl-[protein] + acetyl-CoA = N(6)-biotinyl-L-lysyl-[protein] + malonyl-CoA. It participates in lipid metabolism; malonyl-CoA biosynthesis; malonyl-CoA from acetyl-CoA: step 1/1. Its function is as follows. Component of the acetyl coenzyme A carboxylase (ACC) complex. Biotin carboxylase (BC) catalyzes the carboxylation of biotin on its carrier protein (BCCP) and then the CO(2) group is transferred by the transcarboxylase to acetyl-CoA to form malonyl-CoA. The polypeptide is Acetyl-coenzyme A carboxylase carboxyl transferase subunit beta (Alcanivorax borkumensis (strain ATCC 700651 / DSM 11573 / NCIMB 13689 / SK2)).